We begin with the raw amino-acid sequence, 364 residues long: Protein leg1b (364 aa).

An N-terminal signal peptide occupies residues 1–22; sequence MSEMGFLRSVAAVLLLAVFSHA. Asparagine 70 is a glycosylation site (N-linked (GlcNAc...) asparagine).

Belongs to the LEG1 family. Detected in all tissues tested, with the highest levels in serum (at protein level). At mRNA level, only expressed in liver.

The protein resides in the secreted. Functionally, involved in early development of liver, exocrine pancreas and intestine, probably through cell cycle regulation. In liver, its function is partially redundant with leg1a function. This Danio rerio (Zebrafish) protein is Protein leg1b.